The chain runs to 299 residues: Protease HtpX homolog (299 aa).

The next 2 helical transmembrane spans lie at 14 to 34 and 39 to 59; these read WLLL…VGYL and GFGG…TMIF. A Zn(2+)-binding site is contributed by His143. Glu144 is a catalytic residue. His147 lines the Zn(2+) pocket. 2 helical membrane-spanning segments follow: residues 153–173 and 198–218; these read IRIS…AVMA and IILL…ATLV. Glu227 is a binding site for Zn(2+).

The protein belongs to the peptidase M48B family. The cofactor is Zn(2+).

Its subcellular location is the cell membrane. The protein is Protease HtpX homolog of Streptococcus thermophilus (strain ATCC BAA-491 / LMD-9).